Consider the following 199-residue polypeptide: Recombination protein RecR (199 aa).

The C4-type zinc finger occupies 56–71 (CSICFNVSQDDQCRIC). The Toprim domain occupies 79-174 (SVLCVVEEYK…RVTRLASGLP (96 aa)).

This sequence belongs to the RecR family.

In terms of biological role, may play a role in DNA repair. It seems to be involved in an RecBC-independent recombinational process of DNA repair. It may act with RecF and RecO. This chain is Recombination protein RecR, found in Nocardioides sp. (strain ATCC BAA-499 / JS614).